The sequence spans 453 residues: tRNA-2-methylthio-N(6)-dimethylallyladenosine synthase (453 aa).

The 121-residue stretch at 11-131 (KSFHVKSFGC…LPQLVADAAE (121 aa)) folds into the MTTase N-terminal domain. Positions 20, 56, 94, 167, 171, and 174 each coordinate [4Fe-4S] cluster. The Radical SAM core domain maps to 153–385 (RRQGPTAFLT…QALLNEQQHR (233 aa)). The 62-residue stretch at 388–449 (LATVGKRCEV…PNSLSGALVE (62 aa)) folds into the TRAM domain.

The protein belongs to the methylthiotransferase family. MiaB subfamily. Monomer. [4Fe-4S] cluster serves as cofactor.

The protein resides in the cytoplasm. The enzyme catalyses N(6)-dimethylallyladenosine(37) in tRNA + (sulfur carrier)-SH + AH2 + 2 S-adenosyl-L-methionine = 2-methylsulfanyl-N(6)-dimethylallyladenosine(37) in tRNA + (sulfur carrier)-H + 5'-deoxyadenosine + L-methionine + A + S-adenosyl-L-homocysteine + 2 H(+). Its function is as follows. Catalyzes the methylthiolation of N6-(dimethylallyl)adenosine (i(6)A), leading to the formation of 2-methylthio-N6-(dimethylallyl)adenosine (ms(2)i(6)A) at position 37 in tRNAs that read codons beginning with uridine. The polypeptide is tRNA-2-methylthio-N(6)-dimethylallyladenosine synthase (Rhizorhabdus wittichii (strain DSM 6014 / CCUG 31198 / JCM 15750 / NBRC 105917 / EY 4224 / RW1) (Sphingomonas wittichii)).